Consider the following 567-residue polypeptide: Unguisins hydrolase ungD (567 aa).

The protein belongs to the peptidase S12 family.

Its pathway is secondary metabolite biosynthesis. Hydrolase; part of the gene cluster that mediates the biosynthesis of the unguisins, gamma-aminobutyric acid (GABA)-containing fungal cyclic heptapeptides with the amino acid sequence cyclo-(D-Ala1-D-Val2-L-Phe3-D-Val4-D-Ala5-D-Trp6-GABA7) for unguisin A and cyclo-(D-Ala1-D-Val2-L-Leu3-D-Val4-D-Ala5-D-Trp6-GABA7) for unguisin B. Within the pathway, the hydrolase ungD catalyzes the hydrolysis between the D-tryptophan and GABA residues of unguisins A and B to produce the corresponding linear peptides. The alanine racemase ungC catalyzes the interconversion of L-alanine and D-alanine, providing the D-alanine which is accepted by the first adenylation domain of the nonribosomal peptide synthetase (NRPS) ungA. UngA is the main enzyme within the cluster which condenses the 7 residues using its respective 7 modules. The terminal condensation domain (Ct) is involved in cyclization with D-alanine and thereby releasing of unguisins A and B. In Aspergillus violaceofuscus (strain CBS 115571), this protein is Unguisins hydrolase ungD.